Consider the following 143-residue polypeptide: Transcriptional regulator MraZ (143 aa).

SpoVT-AbrB domains are found at residues 5-47 (EFEH…PLSE) and 76-119 (AVQC…NKAR).

Belongs to the MraZ family. As to quaternary structure, forms oligomers.

Its subcellular location is the cytoplasm. It is found in the nucleoid. This Pediococcus pentosaceus (strain ATCC 25745 / CCUG 21536 / LMG 10740 / 183-1w) protein is Transcriptional regulator MraZ.